A 379-amino-acid polypeptide reads, in one-letter code: Lipoyl synthase 2, mitochondrial (379 aa).

7 residues coordinate [4Fe-4S] cluster: Cys-106, Cys-111, Cys-117, Cys-137, Cys-141, Cys-144, and Ser-352. The 220-residue stretch at Glu-122 to Leu-341 folds into the Radical SAM core domain.

It belongs to the radical SAM superfamily. Lipoyl synthase family. The cofactor is [4Fe-4S] cluster.

The protein resides in the mitochondrion. It carries out the reaction [[Fe-S] cluster scaffold protein carrying a second [4Fe-4S](2+) cluster] + N(6)-octanoyl-L-lysyl-[protein] + 2 oxidized [2Fe-2S]-[ferredoxin] + 2 S-adenosyl-L-methionine + 4 H(+) = [[Fe-S] cluster scaffold protein] + N(6)-[(R)-dihydrolipoyl]-L-lysyl-[protein] + 4 Fe(3+) + 2 hydrogen sulfide + 2 5'-deoxyadenosine + 2 L-methionine + 2 reduced [2Fe-2S]-[ferredoxin]. It functions in the pathway protein modification; protein lipoylation via endogenous pathway; protein N(6)-(lipoyl)lysine from octanoyl-[acyl-carrier-protein]: step 2/2. Catalyzes the radical-mediated insertion of two sulfur atoms into the C-6 and C-8 positions of the octanoyl moiety bound to the lipoyl domains of lipoate-dependent enzymes, thereby converting the octanoylated domains into lipoylated derivatives. This Drosophila yakuba (Fruit fly) protein is Lipoyl synthase 2, mitochondrial.